A 262-amino-acid polypeptide reads, in one-letter code: Probable proteasome subunit beta type-7 (262 aa).

It belongs to the peptidase T1B family. The 26S proteasome consists of a 20S proteasome core and two 19S regulatory subunits. The 20S proteasome core is composed of 28 subunits that are arranged in four stacked rings, resulting in a barrel-shaped structure. The two end rings are each formed by seven alpha subunits, and the two central rings are each formed by seven beta subunits. The catalytic chamber with the active sites is on the inside of the barrel.

It localises to the cytoplasm. Its subcellular location is the nucleus. Non-catalytic component of the proteasome, a multicatalytic proteinase complex which is characterized by its ability to cleave peptides with Arg, Phe, Tyr, Leu, and Glu adjacent to the leaving group at neutral or slightly basic pH. The proteasome has an ATP-dependent proteolytic activity. This chain is Probable proteasome subunit beta type-7, found in Schizosaccharomyces pombe (strain 972 / ATCC 24843) (Fission yeast).